The sequence spans 224 residues: Tumor protein D52 (224 aa).

Phosphoserine is present on residues S36 and S40. Residues 62–114 are a coiled coil; that stretch reads AATISATETLSEEEQEELRRELAKVEEEIQTLSQVLAAKEKHLAEIKRKLGIN. S176 carries the post-translational modification Phosphoserine. Residues 187 to 224 are disordered; the sequence is KVGGTKPAGGDFGEVLNSAANASATTTEPLPEKTQESL. A compositionally biased stretch (low complexity) spans 203-213; sequence NSAANASATTT. S223 is subject to Phosphoserine.

It belongs to the TPD52 family. As to quaternary structure, forms a homodimer or heterodimer with other members of the family. All isoforms interact with several 14-3-3 proteins. In terms of tissue distribution, isoform 2 is expressed in colon, breast, prostate, pancreas and kidney tumor cell lines. Isoform 2 is expressed at high levels in kidney, prostate, brain, small intestine and pancreas, at moderate levels in placenta and colon, at low levels in lung, liver and heart, and at very low levels in spleen, thymus, peripheral mononuclear blood cells, testis and ovary.

This Homo sapiens (Human) protein is Tumor protein D52 (TPD52).